The following is a 181-amino-acid chain: RNA pyrophosphohydrolase (181 aa).

The Nudix hydrolase domain occupies 6–150 (GYRPNVGIII…KCEVYRCALK (145 aa)). Positions 38–59 (GGIKEGETPEQAMYRELYEEVG) match the Nudix box motif.

Belongs to the Nudix hydrolase family. RppH subfamily. A divalent metal cation serves as cofactor.

Functionally, accelerates the degradation of transcripts by removing pyrophosphate from the 5'-end of triphosphorylated RNA, leading to a more labile monophosphorylated state that can stimulate subsequent ribonuclease cleavage. This is RNA pyrophosphohydrolase from Psychromonas ingrahamii (strain DSM 17664 / CCUG 51855 / 37).